Here is a 383-residue protein sequence, read N- to C-terminus: Chaperone protein DnaJ (383 aa).

In terms of domain architecture, J spans 5–70; that stretch reads DYYKTLGVTQ…KKRTAYDQYG (66 aa). The CR-type zinc finger occupies 137–215; it reads GTIKEIKIPT…CHGNGRIEIS (79 aa). Residues Cys150, Cys153, Cys167, Cys170, Cys189, Cys192, Cys203, and Cys206 each coordinate Zn(2+). 4 CXXCXGXG motif repeats span residues 150–157, 167–174, 189–196, and 203–210; these read CPTCYGYG, CPTCRGNG, CPQCHGEG, and CRRCHGNG.

This sequence belongs to the DnaJ family. As to quaternary structure, homodimer. It depends on Zn(2+) as a cofactor.

The protein localises to the cytoplasm. In terms of biological role, participates actively in the response to hyperosmotic and heat shock by preventing the aggregation of stress-denatured proteins and by disaggregating proteins, also in an autonomous, DnaK-independent fashion. Unfolded proteins bind initially to DnaJ; upon interaction with the DnaJ-bound protein, DnaK hydrolyzes its bound ATP, resulting in the formation of a stable complex. GrpE releases ADP from DnaK; ATP binding to DnaK triggers the release of the substrate protein, thus completing the reaction cycle. Several rounds of ATP-dependent interactions between DnaJ, DnaK and GrpE are required for fully efficient folding. Also involved, together with DnaK and GrpE, in the DNA replication of plasmids through activation of initiation proteins. This is Chaperone protein DnaJ from Buchnera aphidicola subsp. Baizongia pistaciae (strain Bp).